The following is a 414-amino-acid chain: COUP transcription factor 2 (414 aa).

The segment at 1–72 is disordered; it reads MAMVVSTWRD…PGGPGSDKQQ (72 aa). Residues 27 to 37 show a composition bias toward pro residues; it reads PPVPGPPPGAP. Low complexity predominate over residues 38–54; it reads HTPQTPGQGGPASTPAQ. Thr-51 is modified (phosphothreonine). Residues 76 to 151 constitute a DNA-binding region (nuclear receptor); it reads HIECVVCGDK…VGMRREAVQR (76 aa). 2 NR C4-type zinc fingers span residues 79-99 and 115-139; these read CVVC…CEGC and CRAN…LKKC. The tract at residues 117-414 is interaction with ZFPM2; the sequence is ANRNCPIDQH…SFNWPYMAIQ (298 aa). Positions 177–403 constitute an NR LBD domain; that stretch reads YLSGYISLLL…TLIRDMLLSG (227 aa). Residues 337 to 414 are important for dimerization; that stretch reads LQEKSQCALE…SFNWPYMAIQ (78 aa).

This sequence belongs to the nuclear hormone receptor family. NR2 subfamily. Interacts with SQSTM1. Binds DNA as a dimer; homodimer or heterodimer with NR2F6. Interacts with NCOA1, NCOA2, NCOA3 and PPARGC1A. Interacts with ZFPM2.

The protein localises to the nucleus. Functionally, ligand-activated transcription factor. Activated by high concentrations of 9-cis-retinoic acid and all-trans-retinoic acid, but not by dexamethasone, cortisol or progesterone (in vitro). Regulation of the apolipoprotein A-I gene transcription. Binds to DNA site A. May be required to establish ovary identity during early gonad development. The sequence is that of COUP transcription factor 2 (Nr2f2) from Rattus norvegicus (Rat).